The chain runs to 245 residues: tRNA pseudouridine synthase A (245 aa).

Catalysis depends on aspartate 52, which acts as the Nucleophile. Tyrosine 111 contributes to the substrate binding site.

The protein belongs to the tRNA pseudouridine synthase TruA family. In terms of assembly, homodimer.

It catalyses the reaction uridine(38/39/40) in tRNA = pseudouridine(38/39/40) in tRNA. In terms of biological role, formation of pseudouridine at positions 38, 39 and 40 in the anticodon stem and loop of transfer RNAs. This chain is tRNA pseudouridine synthase A, found in Nitrobacter hamburgensis (strain DSM 10229 / NCIMB 13809 / X14).